Consider the following 116-residue polypeptide: Large ribosomal subunit protein uL18 (116 aa).

This sequence belongs to the universal ribosomal protein uL18 family. In terms of assembly, part of the 50S ribosomal subunit; part of the 5S rRNA/L5/L18/L25 subcomplex. Contacts the 5S and 23S rRNAs.

Functionally, this is one of the proteins that bind and probably mediate the attachment of the 5S RNA into the large ribosomal subunit, where it forms part of the central protuberance. The protein is Large ribosomal subunit protein uL18 of Caulobacter vibrioides (strain ATCC 19089 / CIP 103742 / CB 15) (Caulobacter crescentus).